Here is a 715-residue protein sequence, read N- to C-terminus: Arginine kinase (715 aa).

2 Approximate repeats span residues 1–366 (MADP…IAKK) and 367–715 (RSVF…KSTK). The 85-residue stretch at 11–95 (KSKNAFPDPL…FDAIIEDYHS (85 aa)) folds into the Phosphagen kinase N-terminal 1 domain. 68–72 (GVGVY) is a substrate binding site. In terms of domain architecture, Phosphagen kinase C-terminal 1 spans 123–362 (YIRSTRIRVA…KALMELEKEA (240 aa)). Residues 126-130 (STRIR) and histidine 189 contribute to the ATP site. Glutamate 229 contributes to the substrate binding site. Arginine 233 serves as a coordination point for ATP. Residue cysteine 275 participates in substrate binding. ATP-binding positions include 284 to 288 (RASVH) and 312 to 317 (RGIHGE). Glutamate 317 lines the substrate pocket. Residues 365–447 (KKRSVFPEVL…FDKIVEDYHS (83 aa)) form the Phosphagen kinase N-terminal 2 domain. The Phosphagen kinase C-terminal 2 domain maps to 475 to 714 (YIRSTRIRVA…KKLLEIEKST (240 aa)).

It belongs to the ATP:guanido phosphotransferase family. In terms of assembly, monomer.

The catalysed reaction is L-arginine + ATP = N(omega)-phospho-L-arginine + ADP + H(+). This is Arginine kinase from Anthopleura japonica (Sea anemone).